We begin with the raw amino-acid sequence, 164 residues long: Ribosome maturation factor RimP (164 aa).

The protein belongs to the RimP family.

Its subcellular location is the cytoplasm. Required for maturation of 30S ribosomal subunits. In Cellvibrio japonicus (strain Ueda107) (Pseudomonas fluorescens subsp. cellulosa), this protein is Ribosome maturation factor RimP.